The chain runs to 262 residues: Ribosomal RNA small subunit methyltransferase A (262 aa).

5 residues coordinate S-adenosyl-L-methionine: I18, G43, E65, D91, and N110.

The protein belongs to the class I-like SAM-binding methyltransferase superfamily. rRNA adenine N(6)-methyltransferase family. RsmA subfamily.

It is found in the cytoplasm. The enzyme catalyses adenosine(1518)/adenosine(1519) in 16S rRNA + 4 S-adenosyl-L-methionine = N(6)-dimethyladenosine(1518)/N(6)-dimethyladenosine(1519) in 16S rRNA + 4 S-adenosyl-L-homocysteine + 4 H(+). Specifically dimethylates two adjacent adenosines (A1518 and A1519) in the loop of a conserved hairpin near the 3'-end of 16S rRNA in the 30S particle. May play a critical role in biogenesis of 30S subunits. The sequence is that of Ribosomal RNA small subunit methyltransferase A from Ehrlichia canis (strain Jake).